A 429-amino-acid chain; its full sequence is Serine--tRNA ligase (429 aa).

235–237 (TAE) provides a ligand contact to L-serine. Position 266 to 268 (266 to 268 (RSE)) interacts with ATP. Glutamate 289 contributes to the L-serine binding site. Residue 353 to 356 (EISS) participates in ATP binding. Serine 389 provides a ligand contact to L-serine.

It belongs to the class-II aminoacyl-tRNA synthetase family. Type-1 seryl-tRNA synthetase subfamily. Homodimer. The tRNA molecule binds across the dimer.

Its subcellular location is the cytoplasm. The catalysed reaction is tRNA(Ser) + L-serine + ATP = L-seryl-tRNA(Ser) + AMP + diphosphate + H(+). The enzyme catalyses tRNA(Sec) + L-serine + ATP = L-seryl-tRNA(Sec) + AMP + diphosphate + H(+). It participates in aminoacyl-tRNA biosynthesis; selenocysteinyl-tRNA(Sec) biosynthesis; L-seryl-tRNA(Sec) from L-serine and tRNA(Sec): step 1/1. Functionally, catalyzes the attachment of serine to tRNA(Ser). Is also able to aminoacylate tRNA(Sec) with serine, to form the misacylated tRNA L-seryl-tRNA(Sec), which will be further converted into selenocysteinyl-tRNA(Sec). This chain is Serine--tRNA ligase, found in Haemophilus influenzae (strain 86-028NP).